The primary structure comprises 654 residues: NADPH-dependent diflavin oxidoreductase 1 (654 aa).

The segment covering 1-10 (MSGSQSSGSP) has biased composition (low complexity). A disordered region spans residues 1–22 (MSGSQSSGSPGSPGPPGPPGRS). Residues 23–167 (ALVVYGSETG…TFIPWLAGFR (145 aa)) enclose the Flavodoxin-like domain. FMN contacts are provided by residues 29-34 (SETGNA), 76-79 (STTG), and 114-123 (LGDSSYPKFN). An FAD-binding FR-type domain is found at 235–485 (HDSLTATLVQ…QLQRGGLNSS (251 aa)). FAD-binding positions include arginine 389, 419 to 422 (RQFS), and 458 to 461 (GVCT). NADP(+) is bound by residues threonine 500, 568-569 (SR), and 574-578 (KVYVQ). Residue tryptophan 654 participates in FAD binding.

Belongs to the NADPH-dependent diflavin oxidoreductase NDOR1 family. It in the N-terminal section; belongs to the flavodoxin family. This sequence in the C-terminal section; belongs to the flavoprotein pyridine nucleotide cytochrome reductase family. Interacts with dre2; as part of the cytosolic iron-sulfur (Fe-S) protein assembly (CIA) machinery. It depends on FAD as a cofactor. FMN is required as a cofactor.

It localises to the cytoplasm. The protein resides in the mitochondrion. It catalyses the reaction 2 oxidized [2Fe-2S]-[protein] + NADPH = 2 reduced [2Fe-2S]-[protein] + NADP(+) + H(+). Its function is as follows. NADPH-dependent reductase which is a central component of the cytosolic iron-sulfur (Fe-S) protein assembly (CIA) machinery. Transfers electrons from NADPH via its FAD and FMN prosthetic groups to the [2Fe-2S] cluster of dre2, another key component of the CIA machinery. In turn, this reduced cluster provides electrons for assembly of cytosolic iron-sulfur cluster proteins. Positively controls H(2)O(2)-induced cell death. In Emericella nidulans (strain FGSC A4 / ATCC 38163 / CBS 112.46 / NRRL 194 / M139) (Aspergillus nidulans), this protein is NADPH-dependent diflavin oxidoreductase 1.